A 207-amino-acid chain; its full sequence is MTARGRFITLEGVDGAGKSTHAAWLADALRDMGRTVVATREPGGTPLGETLRGLVLSESMTLDTETLLMFAARCEHLTQVIEPALARGDWVVCDRYTDATYAYQGGGRQLGADRIAVLEQWMRPALQPDRTWLFDVPLELARARLADARLPDRFEREEAAFFERTRAAYLARAQAHPGRIRIVDSSRPVTEVRAQLHAELQALAEMP.

12-19 (GVDGAGKS) is an ATP binding site.

This sequence belongs to the thymidylate kinase family.

The catalysed reaction is dTMP + ATP = dTDP + ADP. Functionally, phosphorylation of dTMP to form dTDP in both de novo and salvage pathways of dTTP synthesis. The polypeptide is Thymidylate kinase (Bordetella petrii (strain ATCC BAA-461 / DSM 12804 / CCUG 43448)).